A 427-amino-acid chain; its full sequence is BTB/POZ domain-containing protein KCTD16 (427 aa).

A BTB domain is found at 25 to 98; that stretch reads EVIELNVGGQ…LRDRQVVLPD (74 aa). Tyr-112 is modified (phosphotyrosine). Phosphoserine is present on residues Ser-130, Ser-137, Ser-143, and Ser-146.

As to quaternary structure, homopentamer; forms an open pentamer. In contrast to other BTB domain-containing proteins, does not interact with CUL3. Interacts as a tetramer with GABBR1 and GABBR2. As to expression, expressed in the brain, mainly in the hippocampus.

Its subcellular location is the presynaptic cell membrane. It is found in the postsynaptic cell membrane. In terms of biological role, auxiliary subunit of GABA-B receptors that determine the pharmacology and kinetics of the receptor response. Increases agonist potency and markedly alter the G-protein signaling of the receptors by accelerating onset and promoting desensitization. In Mus musculus (Mouse), this protein is BTB/POZ domain-containing protein KCTD16 (Kctd16).